The sequence spans 635 residues: Threonine--tRNA ligase (635 aa).

The segment at M1 to P144 is editing domain. The tract at residues P215–P514 is catalytic. Zn(2+)-binding residues include C307, H359, and H483.

The protein belongs to the class-II aminoacyl-tRNA synthetase family. In terms of assembly, homodimer. The cofactor is Zn(2+).

The protein localises to the cytoplasm. It carries out the reaction tRNA(Thr) + L-threonine + ATP = L-threonyl-tRNA(Thr) + AMP + diphosphate + H(+). In terms of biological role, catalyzes the attachment of threonine to tRNA(Thr) in a two-step reaction: L-threonine is first activated by ATP to form Thr-AMP and then transferred to the acceptor end of tRNA(Thr). Also edits incorrectly charged L-seryl-tRNA(Thr). In Methanococcoides burtonii (strain DSM 6242 / NBRC 107633 / OCM 468 / ACE-M), this protein is Threonine--tRNA ligase.